The sequence spans 356 residues: UDP-N-acetylglucosamine--N-acetylmuramyl-(pentapeptide) pyrophosphoryl-undecaprenol N-acetylglucosamine transferase (356 aa).

UDP-N-acetyl-alpha-D-glucosamine is bound by residues 15 to 17, N127, R163, S191, I244, 263 to 268, and Q288; these read TGG and ALTVSE.

This sequence belongs to the glycosyltransferase 28 family. MurG subfamily.

It localises to the cell inner membrane. It catalyses the reaction di-trans,octa-cis-undecaprenyl diphospho-N-acetyl-alpha-D-muramoyl-L-alanyl-D-glutamyl-meso-2,6-diaminopimeloyl-D-alanyl-D-alanine + UDP-N-acetyl-alpha-D-glucosamine = di-trans,octa-cis-undecaprenyl diphospho-[N-acetyl-alpha-D-glucosaminyl-(1-&gt;4)]-N-acetyl-alpha-D-muramoyl-L-alanyl-D-glutamyl-meso-2,6-diaminopimeloyl-D-alanyl-D-alanine + UDP + H(+). The protein operates within cell wall biogenesis; peptidoglycan biosynthesis. Cell wall formation. Catalyzes the transfer of a GlcNAc subunit on undecaprenyl-pyrophosphoryl-MurNAc-pentapeptide (lipid intermediate I) to form undecaprenyl-pyrophosphoryl-MurNAc-(pentapeptide)GlcNAc (lipid intermediate II). This is UDP-N-acetylglucosamine--N-acetylmuramyl-(pentapeptide) pyrophosphoryl-undecaprenol N-acetylglucosamine transferase from Yersinia pestis bv. Antiqua (strain Antiqua).